The primary structure comprises 377 residues: Outer membrane porin N (377 aa).

The first 21 residues, 1–21, serve as a signal peptide directing secretion; it reads MKSKVLALLIPALLAAGAAHA. Residues 175–189 are compositionally biased toward polar residues; the sequence is NNEGASNGQEGTNNG. Positions 175 to 196 are disordered; the sequence is NNEGASNGQEGTNNGRDVRHEN.

Belongs to the Gram-negative porin family. In terms of assembly, homotrimer.

It localises to the cell outer membrane. Forms pores that allow passive diffusion of small molecules across the outer membrane. Non-specific porin. The sequence is that of Outer membrane porin N (ompN) from Escherichia coli (strain K12).